The primary structure comprises 220 residues: Octanoyltransferase (220 aa).

Residues 29 to 217 enclose the BPL/LPL catalytic domain; that stretch reads GRAPEMIWLL…CFEETFGPLP (189 aa). Substrate contacts are provided by residues 68-75, 148-150, and 161-163; these read RGGQYTYH, AIG, and GLS. Cys-179 serves as the catalytic Acyl-thioester intermediate.

Belongs to the LipB family.

It is found in the cytoplasm. The enzyme catalyses octanoyl-[ACP] + L-lysyl-[protein] = N(6)-octanoyl-L-lysyl-[protein] + holo-[ACP] + H(+). It participates in protein modification; protein lipoylation via endogenous pathway; protein N(6)-(lipoyl)lysine from octanoyl-[acyl-carrier-protein]: step 1/2. In terms of biological role, catalyzes the transfer of endogenously produced octanoic acid from octanoyl-acyl-carrier-protein onto the lipoyl domains of lipoate-dependent enzymes. Lipoyl-ACP can also act as a substrate although octanoyl-ACP is likely to be the physiological substrate. The protein is Octanoyltransferase of Dinoroseobacter shibae (strain DSM 16493 / NCIMB 14021 / DFL 12).